We begin with the raw amino-acid sequence, 320 residues long: tRNA U34 carboxymethyltransferase (320 aa).

Residues lysine 89, tryptophan 103, lysine 108, glycine 128, 150-152, 179-180, methionine 194, tyrosine 198, and arginine 313 each bind carboxy-S-adenosyl-L-methionine; these read DPT and IE.

It belongs to the class I-like SAM-binding methyltransferase superfamily. CmoB family. In terms of assembly, homotetramer.

The enzyme catalyses carboxy-S-adenosyl-L-methionine + 5-hydroxyuridine(34) in tRNA = 5-carboxymethoxyuridine(34) in tRNA + S-adenosyl-L-homocysteine + H(+). Catalyzes carboxymethyl transfer from carboxy-S-adenosyl-L-methionine (Cx-SAM) to 5-hydroxyuridine (ho5U) to form 5-carboxymethoxyuridine (cmo5U) at position 34 in tRNAs. This Actinobacillus pleuropneumoniae serotype 3 (strain JL03) protein is tRNA U34 carboxymethyltransferase.